The chain runs to 495 residues: MADRNLRDLLAPWVPDAPSRALREMTLDSRVAAAGDLFVAVVGHQADGRRYIPQAIAQGVAAIIAEAKDEATDGEIREMHGVPVIYLSQLNERLSALAGRFYHEPSDNLRLVGVTGTNGKTTTTQLLAQWSQLLGEISAVMGTVGNGLLGKVIPTENTTGSAVDVQHELAGLVDQGATFCAMEVSSHGLVQHRVAALKFAASVFTNLSRDHLDYHGDMEHYEAAKWLLYSEHHCGQAIINADDEVGRRWLAKLPDAVAVSMEDHINPNCHGRWLKATEVNYHDSGATIRFSSSWGDGEIESHLMGAFNVSNLLLALATLLALGYPLADLLKTAARLQPVCGRMEVFTAPGKPTVVVDYAHTPDALEKALQAARLHCAGKLWCVFGCGGDRDKGKRPLMGAIAEEFADVAVVTDDNPRTEEPRAIINDILAGMLDAGHAKVMEGRAEAVTCAVMQAKENDVVLVAGKGHEDYQIVGNQRLDYSDRVTVARLLGVIA.

UDP-N-acetyl-alpha-D-muramoyl-L-alanyl-D-glutamate-binding positions include L27, S29, and 44–46 (HQA). 116-122 (GTNGKTT) serves as a coordination point for ATP. UDP-N-acetyl-alpha-D-muramoyl-L-alanyl-D-glutamate-binding positions include N157, 158–159 (TT), S185, Q191, and R193. Position 225 is an N6-carboxylysine (K225). Residues R390, 414-417 (DNPR), G465, and E469 contribute to the meso-2,6-diaminopimelate site. The Meso-diaminopimelate recognition motif motif lies at 414–417 (DNPR).

Belongs to the MurCDEF family. MurE subfamily. Mg(2+) serves as cofactor. In terms of processing, carboxylation is probably crucial for Mg(2+) binding and, consequently, for the gamma-phosphate positioning of ATP.

It is found in the cytoplasm. The enzyme catalyses UDP-N-acetyl-alpha-D-muramoyl-L-alanyl-D-glutamate + meso-2,6-diaminopimelate + ATP = UDP-N-acetyl-alpha-D-muramoyl-L-alanyl-gamma-D-glutamyl-meso-2,6-diaminopimelate + ADP + phosphate + H(+). The protein operates within cell wall biogenesis; peptidoglycan biosynthesis. With respect to regulation, activated by potassium phosphate. Its function is as follows. Catalyzes the addition of meso-diaminopimelic acid to the nucleotide precursor UDP-N-acetylmuramoyl-L-alanyl-D-glutamate (UMAG) in the biosynthesis of bacterial cell-wall peptidoglycan. Is also able to use many meso-diaminopimelate analogs as substrates, although much less efficiently, but not L-lysine. The chain is UDP-N-acetylmuramoyl-L-alanyl-D-glutamate--2,6-diaminopimelate ligase (murE) from Escherichia coli (strain K12).